Consider the following 688-residue polypeptide: Glycine--tRNA ligase beta subunit (688 aa).

This sequence belongs to the class-II aminoacyl-tRNA synthetase family. Tetramer of two alpha and two beta subunits.

It is found in the cytoplasm. It catalyses the reaction tRNA(Gly) + glycine + ATP = glycyl-tRNA(Gly) + AMP + diphosphate. In Listeria monocytogenes serovar 1/2a (strain ATCC BAA-679 / EGD-e), this protein is Glycine--tRNA ligase beta subunit.